A 254-amino-acid polypeptide reads, in one-letter code: Insulin-like growth factor-binding protein 4 (254 aa).

The signal sequence occupies residues Met-1–Gly-21. The IGFBP N-terminal domain maps to Glu-23–Leu-103. 6 disulfides stabilise this stretch: Cys-27–Cys-53, Cys-30–Cys-55, Cys-38–Cys-56, Cys-44–Cys-59, Cys-67–Cys-80, and Cys-74–Cys-100. N-linked (GlcNAc...) asparagine glycosylation is present at Asn-125. Cys-131 and Cys-138 are disulfide-bonded. The interval Arg-149–Ser-169 is disordered. Residues Gln-167–Cys-245 form the Thyroglobulin type-1 domain. 3 cysteine pairs are disulfide-bonded: Cys-170-Cys-200, Cys-211-Cys-222, and Cys-224-Cys-245. At Ser-251 the chain carries Phosphoserine.

Binds IGF2 more than IGF1.

The protein localises to the secreted. Its function is as follows. IGF-binding proteins prolong the half-life of the IGFs and have been shown to either inhibit or stimulate the growth promoting effects of the IGFs on cell culture. They alter the interaction of IGFs with their cell surface receptors. The protein is Insulin-like growth factor-binding protein 4 (Igfbp4) of Rattus norvegicus (Rat).